The chain runs to 194 residues: 5-formyltetrahydrofolate cyclo-ligase (194 aa).

ATP-binding positions include 6–10 (KSQLR), 139–146 (GRGAGFYD), and D177.

This sequence belongs to the 5-formyltetrahydrofolate cyclo-ligase family.

It catalyses the reaction (6S)-5-formyl-5,6,7,8-tetrahydrofolate + ATP = (6R)-5,10-methenyltetrahydrofolate + ADP + phosphate. It participates in one-carbon metabolism; tetrahydrofolate interconversion. In terms of biological role, involved in the removal of 5-formyltetrahydrofolate. In vitro, it is a potent inhibitor of various folate-dependent enzymes in the C1 metabolism network and in vivo it might function as a folate storage. 5-formyltetrahydrofolate is also used as an antifolate rescue agent in cancer chemotherapy. Catalyzes the irreversible ATP-dependent transformation of 5-formyltetrahydrofolate (5-CHO-THF) to form 5,10-methenyltetrahydrofolate (5,10-CH=THF). The reverse reaction is catalyzed by the serine hydroxymethyltransferase GlyA (SHMT). The sequence is that of 5-formyltetrahydrofolate cyclo-ligase from Mycolicibacterium smegmatis (strain ATCC 700084 / mc(2)155) (Mycobacterium smegmatis).